The sequence spans 321 residues: Mas-related G-protein coupled receptor member H (321 aa).

At 1 to 35 the chain is on the extracellular side; that stretch reads MEPLAMTLYPLESTQPTRNKTPNETTWSSEHTDDH. Asparagine 23 carries an N-linked (GlcNAc...) asparagine glycan. A helical transmembrane segment spans residues 36 to 56; sequence TYFLVSLVICSLGLAGNGLLI. Over 57–71 the chain is Cytoplasmic; sequence WFLIFCIKRKPFTIY. Residues 72-92 form a helical membrane-spanning segment; that stretch reads ILHLAIADFMVLLCSSIMKLV. The Extracellular segment spans residues 93–102; that stretch reads NTFHIYNMTL. Asparagine 99 carries an N-linked (GlcNAc...) asparagine glycan. The helical transmembrane segment at 103–126 threads the bilayer; the sequence is ESYAILFMIFGYNTGLHLLTAISV. Residues 127 to 147 are Cytoplasmic-facing; that stretch reads ERCLSVLYPIWYQCQRPKHQS. A helical transmembrane segment spans residues 148–168; sequence AVACMLLWALSVLVSGLENFF. The Extracellular portion of the chain corresponds to 169-188; sequence CILEVKPQFPECRYVYIFSC. The chain crosses the membrane as a helical span at residues 189 to 209; the sequence is ILTFLVFVPLMIFSNLILFIQ. The Cytoplasmic portion of the chain corresponds to 210–225; the sequence is VCCNLKPRQPTKLYVI. Residues 226 to 246 form a helical membrane-spanning segment; that stretch reads IMTTVILFLVFAMPMKVLLII. A topological domain (extracellular) is located at residue glycine 247. The chain crosses the membrane as a helical span at residues 248 to 271; that stretch reads YYSSSLDDSVWDSLPYLNMLSTIN. Residues 272–320 lie on the Cytoplasmic side of the membrane; it reads CSINPIVYFVVGSLRRKRSRKSLKEALQKVFEEKPVVASRENVTQFSLP.

The protein belongs to the G-protein coupled receptor 1 family. Mas subfamily.

The protein resides in the cell membrane. Its function is as follows. Orphan receptor. May regulate nociceptor function and/or development, including the sensation or modulation of pain. This Mus musculus (Mouse) protein is Mas-related G-protein coupled receptor member H (Mrgprh).